The following is a 285-amino-acid chain: MKYIGAHVSAAGGLANAPARAAEIVATAFALFTKNQRQWRAAPLTPQVIDDFKIACEKYHFSAAQILPHDSYLINLGHPVSEALEKSRDAFLDEMQRCEQLGLTLLNFHPGSHLMQIAQEDCLARIAESINIALAQTEGVTAVIENTAGQGSNLGFEFEQLAAIIDGVEDKSRVGVCIDTCHAFAAGYDLRTPEACEKTFAEFGKIVGFQYLRGMHLNDAKSAFGSRVDRHHSLGEGNIGHDAFRWIMQDGRFDGIPLILETINPDIWAEEIAWLKAQQIAEAMA.

His-69, His-109, Glu-145, Asp-179, His-182, His-216, Asp-229, His-231, and Glu-261 together coordinate Zn(2+).

The protein belongs to the AP endonuclease 2 family. Zn(2+) is required as a cofactor.

It catalyses the reaction Endonucleolytic cleavage to 5'-phosphooligonucleotide end-products.. Its function is as follows. Endonuclease IV plays a role in DNA repair. It cleaves phosphodiester bonds at apurinic or apyrimidinic (AP) sites, generating a 3'-hydroxyl group and a 5'-terminal sugar phosphate. The protein is Probable endonuclease 4 of Salmonella paratyphi C (strain RKS4594).